We begin with the raw amino-acid sequence, 355 residues long: Uroporphyrinogen decarboxylase (355 aa).

Residues 27–31 (RQAGR), aspartate 78, tyrosine 155, serine 210, and histidine 328 contribute to the substrate site.

Belongs to the uroporphyrinogen decarboxylase family. Homodimer.

The protein resides in the cytoplasm. The enzyme catalyses uroporphyrinogen III + 4 H(+) = coproporphyrinogen III + 4 CO2. Its pathway is porphyrin-containing compound metabolism; protoporphyrin-IX biosynthesis; coproporphyrinogen-III from 5-aminolevulinate: step 4/4. Its function is as follows. Catalyzes the decarboxylation of four acetate groups of uroporphyrinogen-III to yield coproporphyrinogen-III. The polypeptide is Uroporphyrinogen decarboxylase (Pseudomonas fluorescens (strain ATCC BAA-477 / NRRL B-23932 / Pf-5)).